A 611-amino-acid chain; its full sequence is Actin-binding LIM protein 2 (611 aa).

4 consecutive LIM zinc-binding domains span residues 22–81 (ILCN…LYGT), 81–141 (TRCF…VSVG), 151–210 (RSCG…KFGI), and 210–270 (IRCD…ARTE). Zn(2+)-binding residues include cysteine 83, cysteine 86, histidine 103, cysteine 106, cysteine 109, cysteine 112, cysteine 131, and cysteine 134. Residues cysteine 212, cysteine 215, histidine 232, cysteine 235, cysteine 238, cysteine 241, histidine 260, and cysteine 263 each contribute to the Zn(2+) site. Basic and acidic residues predominate over residues 269 to 278 (TEDRNKETRT). Disordered stretches follow at residues 269-295 (TEDR…SGSP) and 336-527 (YISH…DQRN). 2 stretches are compositionally biased toward low complexity: residues 279 to 295 (SSES…SGSP) and 363 to 372 (SSPSSTGSVS). Phosphoserine is present on residues serine 282, serine 294, serine 364, and serine 367. A compositionally biased stretch (polar residues) spans 393–404 (SGRSTPSLSVLS). A Phosphoserine modification is found at serine 452. Residue threonine 472 is modified to Phosphothreonine. Residues 473-488 (RTNSPDLDTQSLSHSS) show a composition bias toward polar residues. Phosphoserine is present on residues serine 476 and serine 578. The HP domain occupies 543–611 (MREYKIYPYD…NDLKKKALLF (69 aa)).

In terms of assembly, interacts with F-actin and ABRA. In terms of tissue distribution, highly expressed in skeletal muscle.

It localises to the cytoplasm. Functionally, may act as scaffold protein. May stimulate ABRA activity and ABRA-dependent SRF transcriptional activity. This Homo sapiens (Human) protein is Actin-binding LIM protein 2 (ABLIM2).